Consider the following 314-residue polypeptide: MALVAGSAAYQVLRGVTGTFPTQSATLLARAPALCARTLNRRRMSSRRQTDHLERTANTFRQEIISPAKVCEITNESATVKRVRLAIANREFTFKAGQWVDFFIPGVPKVGGFSICSCPGLLETEGVLELAVKYNLHPPAHWIHSQCTLGSEVAVRVGGEFCFDPQPSDLPLDLVLIAGGVGINPLFSILLHVADLHKTHEMTGRGFQMGNVKLYYCAKNTGELLFKRNILDLVKSFPGKITCSFHVTQQSSPVCVELQPFITEGRITEKDLASYVSTDQLCYICGPPPMIESTCKQLESLHVPKEQILFEKWW.

A signal peptide spans 1 to 18; the sequence is MALVAGSAAYQVLRGVTG. The FAD-binding FR-type domain occupies 63–166; sequence EIISPAKVCE…VGGEFCFDPQ (104 aa). 180 to 185 provides a ligand contact to NAD(+); it reads GVGINP.

This chain is Oxidoreductase NAD-binding domain-containing protein 1 (oxnad1), found in Xenopus tropicalis (Western clawed frog).